Consider the following 374-residue polypeptide: Proteinase-activated receptor 3 (374 aa).

An N-terminal signal peptide occupies residues 1–21 (MKALIFAAAGLLLLLPTFCQS). A propeptide spans 22–38 (GMENDTNNLAKPTLPIK) (removed for receptor activation). Residues asparagine 25 and asparagine 82 are each glycosylated (N-linked (GlcNAc...) asparagine). The Extracellular portion of the chain corresponds to 39-94 (TFRGAPPNSFEEFPFSALEGWTGATITVKIKCPEESASHLHVKNATMGYLTSSLST). Residues 95–120 (KLIPAIYLLVFVVGVPANAVTLWMLF) traverse the membrane as a helical segment. At 121 to 128 (FRTRSICT) the chain is on the cytoplasmic side. A helical membrane pass occupies residues 129–148 (TVFYTNLAIADFLFCVTLPF). The Extracellular segment spans residues 149-167 (KIAYHLNGNNWVFGEVLCR). Cysteine 166 and cysteine 245 form a disulfide bridge. Residues 168–189 (ATTVIFYGNMYCSILLLACISI) form a helical membrane-spanning segment. The Cytoplasmic portion of the chain corresponds to 190–206 (NRYLAIVHPFTYRGLPK). Residues 207 to 230 (HTYALVTCGLVWATVFLYMLPFFI) form a helical membrane-spanning segment. Residues 231–260 (LKQEYYLVQPDITTCHDVHNTCESSSPFQL) are Extracellular-facing. A helical membrane pass occupies residues 261–280 (YYFISLAFFGFLIPFVLIIY). The Cytoplasmic portion of the chain corresponds to 281 to 297 (CYAAIIRTLNAYDHRWL). A helical transmembrane segment spans residues 298–322 (WYVKASLLILVIFTICFAPSNIILI). The Extracellular segment spans residues 323 to 336 (IHHANYYYNNTDGL). An N-linked (GlcNAc...) asparagine glycan is attached at asparagine 331. Residues 337–361 (YFIYLIALCLGSLNSCLDPFLYFLM) traverse the membrane as a helical segment. At 362–374 (SKTRNHSTAYLTK) the chain is on the cytoplasmic side.

The protein belongs to the G-protein coupled receptor 1 family. Interacts with INSC/inscuteable and probably GPSM2. A proteolytic cleavage generates a new N-terminus that functions as a tethered ligand. Highest expression in the megakaryocytes of the bone marrow, lower in mature megakaryocytes, in platelets and in a variety of other tissues such as heart and gut.

It is found in the cell membrane. Functionally, receptor for activated thrombin coupled to G proteins that stimulate phosphoinositide hydrolysis. The chain is Proteinase-activated receptor 3 (F2RL2) from Homo sapiens (Human).